Reading from the N-terminus, the 306-residue chain is tRNA dimethylallyltransferase (306 aa).

ATP is bound at residue 9–16 (GPTAVGKT). 11-16 (TAVGKT) is a substrate binding site. The interval 34-37 (DSRQ) is interaction with substrate tRNA.

This sequence belongs to the IPP transferase family. Monomer. Requires Mg(2+) as cofactor.

It carries out the reaction adenosine(37) in tRNA + dimethylallyl diphosphate = N(6)-dimethylallyladenosine(37) in tRNA + diphosphate. Catalyzes the transfer of a dimethylallyl group onto the adenine at position 37 in tRNAs that read codons beginning with uridine, leading to the formation of N6-(dimethylallyl)adenosine (i(6)A). This is tRNA dimethylallyltransferase from Roseiflexus castenholzii (strain DSM 13941 / HLO8).